Reading from the N-terminus, the 444-residue chain is Type VI secretion system baseplate component TssK1 (444 aa).

Forms transient higher-order structures that correlated with dynamics of sheath component TssB1. Interacts with TssA1.

In terms of biological role, core component of the H1 type VI (H1-T6SS) secretion system that plays a role in the release of toxins targeting both eukaryotic and prokaryotic species. Functions as a spatio-temporal marker for assembly of contractile apparatus made of TssB1 and TssC1. This role in assembly depends on TssM1. The chain is Type VI secretion system baseplate component TssK1 from Pseudomonas aeruginosa (strain ATCC 15692 / DSM 22644 / CIP 104116 / JCM 14847 / LMG 12228 / 1C / PRS 101 / PAO1).